A 134-amino-acid chain; its full sequence is ATP synthase epsilon chain (134 aa).

It belongs to the ATPase epsilon chain family. As to quaternary structure, F-type ATPases have 2 components, CF(1) - the catalytic core - and CF(0) - the membrane proton channel. CF(1) has five subunits: alpha(3), beta(3), gamma(1), delta(1), epsilon(1). CF(0) has three main subunits: a, b and c.

The protein resides in the cell inner membrane. Produces ATP from ADP in the presence of a proton gradient across the membrane. The protein is ATP synthase epsilon chain of Rhodospirillum rubrum (strain ATCC 11170 / ATH 1.1.1 / DSM 467 / LMG 4362 / NCIMB 8255 / S1).